The chain runs to 102 residues: Small ribosomal subunit protein uS10 (102 aa).

Belongs to the universal ribosomal protein uS10 family. As to quaternary structure, part of the 30S ribosomal subunit.

In terms of biological role, involved in the binding of tRNA to the ribosomes. The sequence is that of Small ribosomal subunit protein uS10 from Clostridium kluyveri (strain NBRC 12016).